The sequence spans 733 residues: Phosphoribosylformylglycinamidine synthase subunit PurL (733 aa).

The active site involves His41. Positions 44 and 83 each coordinate ATP. Position 85 (Glu85) interacts with Mg(2+). Residues 86–89 (SHNH) and Arg108 each bind substrate. His87 (proton acceptor) is an active-site residue. Asp109 is a binding site for Mg(2+). Residues 212-232 (GASFASQELSEESEEKRPSVQ) form a disordered region. Gln232 serves as a coordination point for substrate. A Mg(2+)-binding site is contributed by Asp260. A substrate-binding site is contributed by 304-306 (ESQ). ATP-binding residues include Asp488 and Gly525. Asn526 provides a ligand contact to Mg(2+). A substrate-binding site is contributed by Ser528.

Belongs to the FGAMS family. In terms of assembly, monomer. Part of the FGAM synthase complex composed of 1 PurL, 1 PurQ and 2 PurS subunits.

It is found in the cytoplasm. It catalyses the reaction N(2)-formyl-N(1)-(5-phospho-beta-D-ribosyl)glycinamide + L-glutamine + ATP + H2O = 2-formamido-N(1)-(5-O-phospho-beta-D-ribosyl)acetamidine + L-glutamate + ADP + phosphate + H(+). The protein operates within purine metabolism; IMP biosynthesis via de novo pathway; 5-amino-1-(5-phospho-D-ribosyl)imidazole from N(2)-formyl-N(1)-(5-phospho-D-ribosyl)glycinamide: step 1/2. Functionally, part of the phosphoribosylformylglycinamidine synthase complex involved in the purines biosynthetic pathway. Catalyzes the ATP-dependent conversion of formylglycinamide ribonucleotide (FGAR) and glutamine to yield formylglycinamidine ribonucleotide (FGAM) and glutamate. The FGAM synthase complex is composed of three subunits. PurQ produces an ammonia molecule by converting glutamine to glutamate. PurL transfers the ammonia molecule to FGAR to form FGAM in an ATP-dependent manner. PurS interacts with PurQ and PurL and is thought to assist in the transfer of the ammonia molecule from PurQ to PurL. This chain is Phosphoribosylformylglycinamidine synthase subunit PurL, found in Caldanaerobacter subterraneus subsp. tengcongensis (strain DSM 15242 / JCM 11007 / NBRC 100824 / MB4) (Thermoanaerobacter tengcongensis).